The sequence spans 97 residues: Homeobox protein HD-9 (97 aa).

Positions 6-65 form a DNA-binding region, homeobox; that stretch reads MPAKKSRLSKAQRDFLDTYFEVNPHPNTQERAYIASQSLVSEEKIRNWFQNRRTRERGDC.

The protein resides in the nucleus. This Encephalitozoon cuniculi (strain GB-M1) (Microsporidian parasite) protein is Homeobox protein HD-9 (HD-9).